The chain runs to 141 residues: Large ribosomal subunit protein uL11 (141 aa).

Belongs to the universal ribosomal protein uL11 family. As to quaternary structure, part of the ribosomal stalk of the 50S ribosomal subunit. Interacts with L10 and the large rRNA to form the base of the stalk. L10 forms an elongated spine to which L12 dimers bind in a sequential fashion forming a multimeric L10(L12)X complex. In terms of processing, one or more lysine residues are methylated.

Functionally, forms part of the ribosomal stalk which helps the ribosome interact with GTP-bound translation factors. The chain is Large ribosomal subunit protein uL11 from Synechococcus sp. (strain CC9605).